Consider the following 403-residue polypeptide: Soluble calcium-activated nucleotidase 1 (403 aa).

At 1 to 44 (MPIQPFDQREWNEPMHSLRISVGGLPVLASMTKATDPRFRPRWR) the chain is on the cytoplasmic side. Residues 45-61 (VILTSFVGAALLWLLYS) traverse the membrane as a helical; Signal-anchor for type II membrane protein segment. Residues 62 to 403 (HHQTPVSGRP…SVKYEGIEFI (342 aa)) are Lumenal-facing. Residue Asn-90 is glycosylated (N-linked (GlcNAc...) asparagine). Ca(2+)-binding residues include Ser-170, Asp-171, Glu-217, Glu-286, Ser-347, and Glu-398.

Belongs to the apyrase family. In terms of assembly, monomer. Homodimer; dimerization is Ca(2+)-dependent. Ca(2+) serves as cofactor. In terms of tissue distribution, detected in intestine, thymus, heart, lung, spleen, kidney, liver, testis, skeletal muscle and brain.

It is found in the endoplasmic reticulum membrane. Its subcellular location is the golgi apparatus. The protein localises to the golgi stack membrane. The enzyme catalyses a ribonucleoside 5'-diphosphate + H2O = a ribonucleoside 5'-phosphate + phosphate + H(+). Functionally, calcium-dependent nucleotidase with a preference for UDP. The order of activity with different substrates is UDP &gt; GDP &gt; IDP &gt;&gt; UTP &gt; CDP = GTP = ITP. Has very low activity towards ADP and even lower activity towards ATP. Does not hydrolyze AMP and GMP. Involved in proteoglycan synthesis. The polypeptide is Soluble calcium-activated nucleotidase 1 (Cant1) (Rattus norvegicus (Rat)).